A 107-amino-acid polypeptide reads, in one-letter code: Large ribosomal subunit protein uL24 (107 aa).

This sequence belongs to the universal ribosomal protein uL24 family. As to quaternary structure, part of the 50S ribosomal subunit.

Its function is as follows. One of two assembly initiator proteins, it binds directly to the 5'-end of the 23S rRNA, where it nucleates assembly of the 50S subunit. One of the proteins that surrounds the polypeptide exit tunnel on the outside of the subunit. The sequence is that of Large ribosomal subunit protein uL24 from Carboxydothermus hydrogenoformans (strain ATCC BAA-161 / DSM 6008 / Z-2901).